Reading from the N-terminus, the 563-residue chain is Solute carrier family 22 member 6 (563 aa).

Residues 1–9 (MAFNDLLQQ) lie on the Cytoplasmic side of the membrane. The helical transmembrane segment at 10–30 (VGGVGRFQQIQVTLVVLPLLL) threads the bilayer. The Extracellular portion of the chain corresponds to 31 to 135 (MASHNTLQNF…LVCSHRALRQ (105 aa)). N-linked (GlcNAc...) asparagine glycosylation is found at Asn-39, Asn-56, Asn-92, Asn-97, and Asn-113. A helical membrane pass occupies residues 136 to 156 (LAQSLYMVGVLLGAMVFGYLA). Residues 157-164 (DRLGRRKV) are Cytoplasmic-facing. A helical membrane pass occupies residues 165–187 (LILNYLQTAVSGTCAAFAPNFPI). The Extracellular segment spans residues 188 to 190 (YCA). A helical transmembrane segment spans residues 191 to 213 (FRLLSGMALAGISLNCMTLNVEW). Residues 214-224 (MPIHTRACVGT) are Cytoplasmic-facing. The helical transmembrane segment at 225 to 245 (LIGYVYSLGQFLLAGVAYAVP) threads the bilayer. At 246-248 (HWR) the chain is on the extracellular side. Residues 249–269 (HLQLLVSAPFFAFFIYSWFFI) form a helical membrane-spanning segment. Over 270-337 (ESARWHSSSG…ELLRCPTLRH (68 aa)) the chain is Cytoplasmic. Residues 338 to 358 (LFLCLSMLWFATSFAYYGLVM) form a helical membrane-spanning segment. Residues 359–368 (DLQGFGVSIY) are Extracellular-facing. Residues 369-389 (LIQVIFGAVDLPAKLVGFLVI) traverse the membrane as a helical segment. Over 390–395 (NSLGRR) the chain is Cytoplasmic. The helical transmembrane segment at 396-416 (PAQMAALLLAGICILLNGVIP) threads the bilayer. The Extracellular portion of the chain corresponds to 417-425 (QDQSIVRTS). A helical membrane pass occupies residues 426–446 (LAVLGKGCLAASFNCIFLYTG). Residues 447–455 (ELYPTMIRQ) lie on the Cytoplasmic side of the membrane. Residues 456-475 (TGMGMGSTMARVGSIVSPLV) traverse the membrane as a helical segment. At 476–484 (SMTAELYPS) the chain is on the extracellular side. Residues 485–505 (MPLFIYGAVPVAASAVTVLLP) form a helical membrane-spanning segment. Residues 506-563 (ETLGQPLPDTVQDLESRWAPTQKEAGIYPRKGKQTRQQQEHQKYMVPLQASAQEKNGL) are Cytoplasmic-facing. The interval 525–563 (PTQKEAGIYPRKGKQTRQQQEHQKYMVPLQASAQEKNGL) is disordered.

Belongs to the major facilitator (TC 2.A.1) superfamily. Organic cation transporter (TC 2.A.1.19) family. Post-translationally, glycosylated. Glycosylation at Asn-113 may occur at a secondary level. Glycosylation is necessary for proper targeting of the transporter to the plasma membrane. As to expression, strongly expressed in kidney. Expressed at lower level in liver, skeletal muscle, brain and placenta. In kidney, found at the basolateral membrane of the proximal tubule. In testis, primarily localized to the basal membrane of Sertoli cells and weakly expressed in Leydig cells and vascular endothelial cells.

The protein resides in the basolateral cell membrane. The protein localises to the basal cell membrane. The enzyme catalyses (6R)-L-erythro-5,6,7,8-tetrahydrobiopterin(out) + a dicarboxylate(in) = (6R)-L-erythro-5,6,7,8-tetrahydrobiopterin(in) + a dicarboxylate(out). The catalysed reaction is L-erythro-7,8-dihydrobiopterin(out) + a dicarboxylate(in) = L-erythro-7,8-dihydrobiopterin(in) + a dicarboxylate(out). It catalyses the reaction L-sepiapterin(out) + a dicarboxylate(in) = L-sepiapterin(in) + a dicarboxylate(out). It carries out the reaction prostaglandin F2alpha(out) + a dicarboxylate(in) = prostaglandin F2alpha(in) + a dicarboxylate(out). The enzyme catalyses prostaglandin E2(out) + a dicarboxylate(in) = prostaglandin E2(in) + a dicarboxylate(out). The catalysed reaction is 3',5'-cyclic AMP(out) + a dicarboxylate(in) = 3',5'-cyclic AMP(in) + a dicarboxylate(out). It catalyses the reaction 3',5'-cyclic GMP(out) + a dicarboxylate(in) = 3',5'-cyclic GMP(in) + a dicarboxylate(out). It carries out the reaction urate(out) + a dicarboxylate(in) = urate(in) + a dicarboxylate(out). The enzyme catalyses kynurenate(out) + glutarate(in) = kynurenate(in) + glutarate(out). The catalysed reaction is (indol-3-yl)acetate(out) + a dicarboxylate(in) = (indol-3-yl)acetate(in) + a dicarboxylate(out). It catalyses the reaction indoxyl sulfate(out) + a dicarboxylate(in) = indoxyl sulfate(in) + a dicarboxylate(out). It carries out the reaction N-benzoylglycine(out) + a dicarboxylate(in) = N-benzoylglycine(in) + a dicarboxylate(out). The enzyme catalyses 3-carboxy-4-methyl-5-propyl-2-furanpropanoate(out) + a dicarboxylate(in) = 3-carboxy-4-methyl-5-propyl-2-furanpropanoate(in) + a dicarboxylate(out). Functionally, secondary active transporter that functions as a Na(+)-independent organic anion (OA)/dicarboxylate antiporter where the uptake of one molecule of OA into the cell is coupled with an efflux of one molecule of intracellular dicarboxylate such as 2-oxoglutarate or glutarate. Mediates the uptake of OA across the basolateral side of proximal tubule epithelial cells, thereby contributing to the renal elimination of endogenous OA from the systemic circulation into the urine. Functions as a biopterin transporters involved in the uptake and the secretion of coenzymes tetrahydrobiopterin (BH4), dihydrobiopterin (BH2) and sepiapterin to urine, thereby determining baseline levels of blood biopterins. Transports prostaglandin E2 (PGE2) and prostaglandin F2-alpha (PGF2-alpha) and may contribute to their renal excretion. Also mediates the uptake of cyclic nucleotides such as cAMP and cGMP. Involved in the transport of neuroactive tryptophan metabolites kynurenate (KYNA) and xanthurenate (XA) and may contribute to their secretion from the brain. May transport glutamate. Also involved in the disposition of uremic toxins and potentially toxic xenobiotics by the renal organic anion secretory pathway, helping reduce their undesired toxicological effects on the body. Uremic toxins include the indoxyl sulfate (IS), hippurate/N-benzoylglycine (HA), indole acetate (IA), 3-carboxy-4- methyl-5-propyl-2-furanpropionate (CMPF) and urate. Xenobiotics include the mycotoxin ochratoxin (OTA). May also contribute to the transport of organic compounds in testes across the blood-testis-barrier. The sequence is that of Solute carrier family 22 member 6 from Homo sapiens (Human).